We begin with the raw amino-acid sequence, 570 residues long: piRNA biogenesis protein EXD1 (570 aa).

The 3'-5' exonuclease domain occupies 135-307; that stretch reads YTVIDQFQQK…LPPSLLKILA (173 aa). 2 stretches are compositionally biased toward basic and acidic residues: residues 433–442 and 453–465; these read DEKFLDKESK and PRKE…DSKN. The disordered stretch occupies residues 433–485; the sequence is DEKFLDKESKQTTAKSQIVPPRKEGEAHKDSKNKPGCWESAGPEDPRAQKAHA.

This sequence belongs to the EXD1 family. In terms of assembly, homodimer. Component of the PET complex, at least composed of EXD1, PIWIL2, TDRD12 and piRNAs.

The protein resides in the cytoplasm. Its function is as follows. RNA-binding component of the PET complex, a multiprotein complex required for the processing of piRNAs during spermatogenesis. The piRNA metabolic process mediates the repression of transposable elements during meiosis by forming complexes composed of piRNAs and Piwi proteins and governs the methylation and subsequent repression of transposable elements, preventing their mobilization, which is essential for the germline integrity. The PET complex is required during the secondary piRNAs metabolic process for the PIWIL2 slicing-triggered loading of PIWIL4 piRNAs. In the PET complex, EXD1 probably acts as an RNA adapter. EXD1 is an inactive exonuclease. The sequence is that of piRNA biogenesis protein EXD1 (Exd1) from Mus musculus (Mouse).